The sequence spans 395 residues: Protein HIGH CHLOROPHYLL FLUORESCENCE PHENOTYPE 244, chloroplastic (395 aa).

A chloroplast-targeting transit peptide spans 1–64 (MASLRLPAQL…ERSIVVPVTC (64 aa)).

Belongs to the NmrA-type oxidoreductase family. Component of a high molecular weight complex containing OHP1, OHP2 and HCF244, and PSII core proteins D1/D2, HCF136 and HCF173. Interacts with OHP1. Forms a trimeric complex with OHP1 and OHP2 that mutually stabilizes each subunit.

The protein resides in the plastid. It localises to the chloroplast stroma. The protein localises to the chloroplast thylakoid membrane. Functionally, auxiliary factor required, together with HCF173, for the biogenesis of photosystem II (PSII), especially for the synthesis of the reaction center proteins (e.g. D1), via the regulation of the corresponding mRNA (e.g. psbA) translation initiation (ribosomal loading) and stabilization. Forms a trimeric complex with OHP1 and OHP2 that is required to promote PSII core subunit assembly. The trimeric complex forms a transient PSII reaction center-like complex with PsbA, PsbD, PsbE, PsbF and PsbI subunits in thylakoids for early assembly of PSII as well as PSII repair. The trimeric complex is required for the recruitment of ribosomes to the psbA mRNA during PSII biogenesis and repair. The sequence is that of Protein HIGH CHLOROPHYLL FLUORESCENCE PHENOTYPE 244, chloroplastic from Arabidopsis thaliana (Mouse-ear cress).